A 98-amino-acid chain; its full sequence is Integration host factor subunit beta (98 aa).

The protein belongs to the bacterial histone-like protein family. Heterodimer of an alpha and a beta chain.

Its function is as follows. This protein is one of the two subunits of integration host factor, a specific DNA-binding protein that functions in genetic recombination as well as in transcriptional and translational control. The protein is Integration host factor subunit beta of Pseudomonas syringae pv. tomato (strain ATCC BAA-871 / DC3000).